Here is a 28-residue protein sequence, read N- to C-terminus: Dermaseptin-6TR (28 aa).

In terms of tissue distribution, expressed by the skin glands.

The protein localises to the secreted. Has antimicrobial activity. The protein is Dermaseptin-6TR of Phyllomedusa trinitatis (Trinidad leaf frog).